The primary structure comprises 268 residues: MATYIVGDIQGCFDELQQLLKRVNFSTQHDQLWLAGDLVARGPKSLETLRFVKSLGDSAKVVLGNHDLHLLAVSYGLKKRKDKDKTTPIFLAKDREELLSWLAKQPLLAEHDEFVMCHAGISPQWDLETARQCAREVERIIQGEELPWLLKNMYSNLPDLWDDSLEGLDRYRYIINAFTRMRFCFSDGRLDMDCKLPPQEVTGDQLVPWFELPHRIPLEKTVLFGHWAALQGYIDEKVIGLDTGCVWGGSLTMIRWEDKQLFTQDALD.

The protein belongs to the Ap4A hydrolase family.

It catalyses the reaction P(1),P(4)-bis(5'-adenosyl) tetraphosphate + H2O = 2 ADP + 2 H(+). Hydrolyzes diadenosine 5',5'''-P1,P4-tetraphosphate to yield ADP. In Vibrio parahaemolyticus serotype O3:K6 (strain RIMD 2210633), this protein is Bis(5'-nucleosyl)-tetraphosphatase, symmetrical.